The sequence spans 315 residues: L-lactate dehydrogenase (315 aa).

Residues valine 14, aspartate 35, and tyrosine 66 each contribute to the NAD(+) site. Residues glutamine 83, arginine 89, and 121–124 (NPVD) contribute to the substrate site. NAD(+)-binding positions include 119–121 (VAN) and serine 144. 149–152 (DTAR) serves as a coordination point for substrate. Catalysis depends on histidine 176, which acts as the Proton acceptor. Tyrosine 221 bears the Phosphotyrosine mark. Threonine 230 is a substrate binding site.

The protein belongs to the LDH/MDH superfamily. LDH family. As to quaternary structure, homotetramer.

It localises to the cytoplasm. It catalyses the reaction (S)-lactate + NAD(+) = pyruvate + NADH + H(+). It functions in the pathway fermentation; pyruvate fermentation to lactate; (S)-lactate from pyruvate: step 1/1. Functionally, catalyzes the conversion of lactate to pyruvate. The polypeptide is L-lactate dehydrogenase (Mesomycoplasma hyopneumoniae (strain 7448) (Mycoplasma hyopneumoniae)).